The sequence spans 349 residues: FK506-binding protein-like (349 aa).

A Phosphothreonine modification is found at T3. A disordered region spans residues 36 to 55; it reads RQQPRDPPTETLELEVSPDP. TPR repeat units lie at residues 210 to 243, 252 to 285, and 286 to 319; these read AREE…LLTL, TVLH…EPGH, and LKAL…DPKN.

As to quaternary structure, forms a ternary complex with CDKN1A/p21 and HSP90AB1/Hsp90. Ubiquitously expressed with higher levels in testis.

Its function is as follows. May be involved in response to X-ray. Regulates p21 protein stability by binding to Hsp90 and p21. In Homo sapiens (Human), this protein is FK506-binding protein-like (FKBPL).